We begin with the raw amino-acid sequence, 189 residues long: Peptidyl-tRNA hydrolase (189 aa).

Tyr-15 is a binding site for tRNA. His-20 acts as the Proton acceptor in catalysis. TRNA contacts are provided by Phe-66, Asn-68, and Asn-114.

It belongs to the PTH family. In terms of assembly, monomer.

The protein resides in the cytoplasm. The enzyme catalyses an N-acyl-L-alpha-aminoacyl-tRNA + H2O = an N-acyl-L-amino acid + a tRNA + H(+). Functionally, hydrolyzes ribosome-free peptidyl-tRNAs (with 1 or more amino acids incorporated), which drop off the ribosome during protein synthesis, or as a result of ribosome stalling. In terms of biological role, catalyzes the release of premature peptidyl moieties from peptidyl-tRNA molecules trapped in stalled 50S ribosomal subunits, and thus maintains levels of free tRNAs and 50S ribosomes. This is Peptidyl-tRNA hydrolase from Streptococcus pneumoniae (strain Taiwan19F-14).